Reading from the N-terminus, the 1182-residue chain is Rho GTPase-activating protein 20 (1182 aa).

Residues 1–40 (MEAMSPQQDALGAQPGRSSSLTGMSRIAGGPGTKKKMKTL) are disordered. Serine 46 bears the Phosphoserine mark. In terms of domain architecture, PH spans 85–185 (TLLIDGPVEL…WLSLLQRYIA (101 aa)). The Ras-associating domain occupies 194–283 (KSIPLKIFAK…TALLTQGSRD (90 aa)). The 187-residue stretch at 365-551 (VSLPDLCEND…FLIENCCRVF (187 aa)) folds into the Rho-GAP domain. Phosphoserine occurs at positions 704 and 730. 6 disordered regions span residues 745–772 (QTQP…KRNT), 803–839 (VASY…QKSS), 935–955 (SYSS…SSQD), 982–1011 (TQRK…GQAS), 1074–1101 (LPSC…EGPG), and 1142–1182 (SGGQ…GTDI). The span at 758-772 (KQSSVTGTDVSKRNT) shows a compositional bias: polar residues. A compositionally biased stretch (basic and acidic residues) spans 811-824 (SQDHPRKQAFDADP).

In terms of biological role, GTPase activator for the Rho-type GTPases by converting them to an inactive GDP-bound state. The sequence is that of Rho GTPase-activating protein 20 (Arhgap20) from Mus musculus (Mouse).